Consider the following 556-residue polypeptide: Undecaprenyl phosphate-alpha-4-amino-4-deoxy-L-arabinose arabinosyl transferase (556 aa).

A run of 11 helical transmembrane segments spans residues 5–25 (MIKL…LLPL), 88–108 (FASV…ALLL), 116–136 (LLAA…TYSV), 179–199 (FMTK…PVAL), 207–227 (LLLF…PWAL), 258–278 (APFW…LALL), 296–316 (FLLL…KGKL), 319–339 (YILP…SGLA), 355–375 (LAFG…IIMP), 384–404 (LTIV…AVSL), and 410–430 (WGYL…GSIP).

This sequence belongs to the glycosyltransferase 83 family.

It is found in the cell inner membrane. The enzyme catalyses 4-amino-4-deoxy-alpha-L-arabinopyranosyl di-trans,octa-cis-undecaprenyl phosphate + lipid IVA = lipid IIA + di-trans,octa-cis-undecaprenyl phosphate.. It participates in lipopolysaccharide metabolism; 4-amino-4-deoxy-beta-L-arabinose-lipid A biosynthesis. Functionally, catalyzes the transfer of the L-Ara4N moiety of the glycolipid undecaprenyl phosphate-alpha-L-Ara4N to lipid A. The modified arabinose is attached to lipid A and is required for resistance to polymyxin and cationic antimicrobial peptides. The chain is Undecaprenyl phosphate-alpha-4-amino-4-deoxy-L-arabinose arabinosyl transferase from Pectobacterium carotovorum subsp. carotovorum (strain PC1).